We begin with the raw amino-acid sequence, 635 residues long: Interferon-induced GTP-binding protein Mx1 (635 aa).

Residues 31-309 (DLALPAIAVI…LVHHIELSLP (279 aa)) form the Dynamin-type G domain. The segment at 41–48 (GDQSSGKS) is G1 motif. GTP is bound at residue 41–48 (GDQSSGKS). Residues 66 to 68 (VTR) are G2 motif. The segment at 147 to 150 (DLPG) is G3 motif. GTP-binding positions include 147–151 (DLPGI) and 216–219 (TKPD). The interval 216 to 219 (TKPD) is G4 motif. The G5 motif stretch occupies residues 248-251 (RCRG). One can recognise a GED domain in the interval 549-635 (LEELMRHLKS…MEARNYLVKF (87 aa)).

The protein belongs to the TRAFAC class dynamin-like GTPase superfamily. Dynamin/Fzo/YdjA family.

It localises to the cytoplasm. The polypeptide is Interferon-induced GTP-binding protein Mx1 (mx1) (Ictalurus punctatus (Channel catfish)).